A 355-amino-acid polypeptide reads, in one-letter code: NADH-quinone oxidoreductase subunit H (355 aa).

8 helical membrane-spanning segments follow: residues 25-45 (VVRI…LILW), 91-111 (WLYL…WAVI), 126-146 (LLYA…AGWA), 170-190 (MGFA…SEIV), 205-225 (FLSW…ISGI), 253-273 (MAFA…SALA), 290-310 (FIPG…VFIW), and 330-350 (VFLP…MSPL).

The protein belongs to the complex I subunit 1 family. NDH-1 is composed of 14 different subunits. Subunits NuoA, H, J, K, L, M, N constitute the membrane sector of the complex.

It is found in the cell inner membrane. It catalyses the reaction a quinone + NADH + 5 H(+)(in) = a quinol + NAD(+) + 4 H(+)(out). In terms of biological role, NDH-1 shuttles electrons from NADH, via FMN and iron-sulfur (Fe-S) centers, to quinones in the respiratory chain. The immediate electron acceptor for the enzyme in this species is believed to be ubiquinone. Couples the redox reaction to proton translocation (for every two electrons transferred, four hydrogen ions are translocated across the cytoplasmic membrane), and thus conserves the redox energy in a proton gradient. This subunit may bind ubiquinone. In Burkholderia cenocepacia (strain ATCC BAA-245 / DSM 16553 / LMG 16656 / NCTC 13227 / J2315 / CF5610) (Burkholderia cepacia (strain J2315)), this protein is NADH-quinone oxidoreductase subunit H.